A 328-amino-acid chain; its full sequence is uncharacterized protein (328 aa).

Positions 296–328 are disordered; sequence APEGDLEDEIIEVDPEQPRDDPYRRLRTPPPGG. A compositionally biased stretch (acidic residues) spans 299–310; the sequence is GDLEDEIIEVDP.

Possibly necessary for replication. This is an uncharacterized protein from Halobacterium sp. (strain GN101).